The chain runs to 496 residues: Glycerol kinase (496 aa).

Position 12 (Thr12) interacts with ADP. Thr12, Thr13, and Ser14 together coordinate ATP. Residue Thr12 participates in sn-glycerol 3-phosphate binding. Arg16 lines the ADP pocket. Residues Arg82, Glu83, and Tyr134 each contribute to the sn-glycerol 3-phosphate site. 3 residues coordinate glycerol: Arg82, Glu83, and Tyr134. His230 is subject to Phosphohistidine; by HPr. A sn-glycerol 3-phosphate-binding site is contributed by Asp244. Glycerol-binding residues include Asp244 and Gln245. 2 residues coordinate ADP: Thr266 and Gly309. ATP contacts are provided by Thr266, Gly309, Gln313, and Gly410. Positions 410 and 414 each coordinate ADP.

It belongs to the FGGY kinase family. As to quaternary structure, homotetramer and homodimer (in equilibrium). Post-translationally, the phosphoenolpyruvate-dependent sugar phosphotransferase system (PTS), including enzyme I, and histidine-containing protein (HPr) are required for the phosphorylation, which leads to the activation of the enzyme.

The enzyme catalyses glycerol + ATP = sn-glycerol 3-phosphate + ADP + H(+). It participates in polyol metabolism; glycerol degradation via glycerol kinase pathway; sn-glycerol 3-phosphate from glycerol: step 1/1. Activated by phosphorylation and inhibited by fructose 1,6-bisphosphate (FBP). In terms of biological role, key enzyme in the regulation of glycerol uptake and metabolism. Catalyzes the phosphorylation of glycerol to yield sn-glycerol 3-phosphate. In Bacillus thuringiensis subsp. konkukian (strain 97-27), this protein is Glycerol kinase.